Consider the following 509-residue polypeptide: Probable cytochrome P450 513A1 (509 aa).

A helical transmembrane segment spans residues 2–19; it reads NYLVGLVLIFTIFYFFLQ. Position 454 (Cys454) interacts with heme.

This sequence belongs to the cytochrome P450 family. Requires heme as cofactor.

It is found in the membrane. The polypeptide is Probable cytochrome P450 513A1 (cyp513A1) (Dictyostelium discoideum (Social amoeba)).